The sequence spans 638 residues: 1-deoxy-D-xylulose-5-phosphate synthase (638 aa).

Thiamine diphosphate is bound by residues histidine 75 and alanine 116–serine 118. Aspartate 147 lines the Mg(2+) pocket. Residues glycine 148–alanine 149, asparagine 177, tyrosine 288, and glutamate 370 each bind thiamine diphosphate. Asparagine 177 is a Mg(2+) binding site.

The protein belongs to the transketolase family. DXPS subfamily. In terms of assembly, homodimer. Mg(2+) serves as cofactor. Thiamine diphosphate is required as a cofactor.

It carries out the reaction D-glyceraldehyde 3-phosphate + pyruvate + H(+) = 1-deoxy-D-xylulose 5-phosphate + CO2. The protein operates within metabolic intermediate biosynthesis; 1-deoxy-D-xylulose 5-phosphate biosynthesis; 1-deoxy-D-xylulose 5-phosphate from D-glyceraldehyde 3-phosphate and pyruvate: step 1/1. Catalyzes the acyloin condensation reaction between C atoms 2 and 3 of pyruvate and glyceraldehyde 3-phosphate to yield 1-deoxy-D-xylulose-5-phosphate (DXP). In Cupriavidus taiwanensis (strain DSM 17343 / BCRC 17206 / CCUG 44338 / CIP 107171 / LMG 19424 / R1) (Ralstonia taiwanensis (strain LMG 19424)), this protein is 1-deoxy-D-xylulose-5-phosphate synthase.